We begin with the raw amino-acid sequence, 607 residues long: Aspartate--tRNA(Asp/Asn) ligase (607 aa).

Glutamate 168 contacts L-aspartate. An aspartate region spans residues glutamine 192–lysine 195. L-aspartate is bound at residue arginine 214. Residues arginine 214–glutamate 216 and glutamine 223 contribute to the ATP site. Histidine 449 provides a ligand contact to L-aspartate. Glutamate 483 is an ATP binding site. Residue arginine 490 coordinates L-aspartate. Glycine 535–arginine 538 is an ATP binding site. The interval leucine 578–threonine 607 is disordered. Positions alanine 580 to alanine 590 are enriched in basic and acidic residues. Over residues arginine 591 to threonine 607 the composition is skewed to low complexity.

Belongs to the class-II aminoacyl-tRNA synthetase family. Type 1 subfamily. Homodimer.

It localises to the cytoplasm. The enzyme catalyses tRNA(Asx) + L-aspartate + ATP = L-aspartyl-tRNA(Asx) + AMP + diphosphate. In terms of biological role, aspartyl-tRNA synthetase with relaxed tRNA specificity since it is able to aspartylate not only its cognate tRNA(Asp) but also tRNA(Asn). Reaction proceeds in two steps: L-aspartate is first activated by ATP to form Asp-AMP and then transferred to the acceptor end of tRNA(Asp/Asn). The protein is Aspartate--tRNA(Asp/Asn) ligase of Salinispora tropica (strain ATCC BAA-916 / DSM 44818 / JCM 13857 / NBRC 105044 / CNB-440).